Reading from the N-terminus, the 125-residue chain is Small ribosomal subunit protein uS13 (125 aa).

Positions Arg92–Lys125 are disordered. The span at Arg107–Lys125 shows a compositional bias: basic residues.

The protein belongs to the universal ribosomal protein uS13 family. In terms of assembly, part of the 30S ribosomal subunit. Forms a loose heterodimer with protein S19. Forms two bridges to the 50S subunit in the 70S ribosome.

Located at the top of the head of the 30S subunit, it contacts several helices of the 16S rRNA. In the 70S ribosome it contacts the 23S rRNA (bridge B1a) and protein L5 of the 50S subunit (bridge B1b), connecting the 2 subunits; these bridges are implicated in subunit movement. Contacts the tRNAs in the A and P-sites. In Chlorobium limicola (strain DSM 245 / NBRC 103803 / 6330), this protein is Small ribosomal subunit protein uS13.